An 81-amino-acid chain; its full sequence is Small ribosomal subunit protein eS21 (81 aa).

Belongs to the eukaryotic ribosomal protein eS21 family.

The chain is Small ribosomal subunit protein eS21 (RPS21) from Zea mays (Maize).